Here is a 457-residue protein sequence, read N- to C-terminus: Fibrinogen C domain-containing protein 1 (457 aa).

The segment at 1 to 20 (MGSDRWKNIGGAPQMEDSVQ) is disordered. Residues 1–33 (MGSDRWKNIGGAPQMEDSVQDKSQRKGCGYILC) are Cytoplasmic-facing. Residues 34-54 (TVLLSVAVLLAVTVTGAVLFM) traverse the membrane as a helical; Signal-anchor for type II membrane protein segment. Residues 55 to 457 (NHYHAPSTEP…MKIRPQREEN (403 aa)) are Extracellular-facing. The disordered stretch occupies residues 211–235 (RPRVKADLQRAPSRSSRPRGCANGS). The 224-residue stretch at 231–454 (CANGSKPRDC…FTEMKIRPQR (224 aa)) folds into the Fibrinogen C-terminal domain. A glycan (N-linked (GlcNAc...) asparagine) is linked at N233. A disulfide bridge links C240 with C269. N-linked (GlcNAc...) asparagine glycosylation occurs at N336. Residues D389 and D391 each contribute to the Ca(2+) site. A disulfide bond links C397 and C410.

Homotetramer; disulfide-linked.

It is found in the membrane. Acetyl group-binding receptor which shows a calcium-dependent binding to acetylated structures such as chitin, some N-acetylated carbohydrates, and amino acids. The protein is Fibrinogen C domain-containing protein 1 (fibcd1) of Xenopus tropicalis (Western clawed frog).